Here is a 486-residue protein sequence, read N- to C-terminus: Replication factor C large subunit (486 aa).

46–53 (GPPGSGKT) contacts ATP. Positions 419–486 (VKKETPKKTE…KKQATLDSFF (68 aa)) are disordered. Composition is skewed to basic and acidic residues over residues 420-432 (KKETPKKTEKPKE) and 442-480 (RISEPPKEPLKEVIEETLEKSVEKADTKEEKKKDPKKQA).

The protein belongs to the activator 1 small subunits family. RfcL subfamily. In terms of assembly, heteromultimer composed of small subunits (RfcS) and large subunits (RfcL).

In terms of biological role, part of the RFC clamp loader complex which loads the PCNA sliding clamp onto DNA. The chain is Replication factor C large subunit from Methanococcus maripaludis (strain DSM 14266 / JCM 13030 / NBRC 101832 / S2 / LL).